Reading from the N-terminus, the 312-residue chain is GTP cyclohydrolase MptA (312 aa).

Belongs to the GTP cyclohydrolase IV family. As to quaternary structure, homodimer. Requires Fe(2+) as cofactor.

The enzyme catalyses GTP + H2O = 7,8-dihydroneopterin 2',3'-cyclic phosphate + formate + diphosphate + H(+). It functions in the pathway cofactor biosynthesis; 5,6,7,8-tetrahydromethanopterin biosynthesis. Functionally, converts GTP to 7,8-dihydro-D-neopterin 2',3'-cyclic phosphate, the first intermediate in the biosynthesis of coenzyme methanopterin. In Methanococcus vannielii (strain ATCC 35089 / DSM 1224 / JCM 13029 / OCM 148 / SB), this protein is GTP cyclohydrolase MptA.